Reading from the N-terminus, the 123-residue chain is Large ribosomal subunit protein bL12 (123 aa).

This sequence belongs to the bacterial ribosomal protein bL12 family. In terms of assembly, homodimer. Part of the ribosomal stalk of the 50S ribosomal subunit. Forms a multimeric L10(L12)X complex, where L10 forms an elongated spine to which 2 to 4 L12 dimers bind in a sequential fashion. Binds GTP-bound translation factors.

In terms of biological role, forms part of the ribosomal stalk which helps the ribosome interact with GTP-bound translation factors. Is thus essential for accurate translation. This is Large ribosomal subunit protein bL12 from Clostridium acetobutylicum (strain ATCC 824 / DSM 792 / JCM 1419 / IAM 19013 / LMG 5710 / NBRC 13948 / NRRL B-527 / VKM B-1787 / 2291 / W).